A 1285-amino-acid polypeptide reads, in one-letter code: DNA polymerase II large subunit (1285 aa).

The tract at residues 565 to 586 (TRIGGRMGRPGKSKPREMRPPP) is disordered.

The protein belongs to the archaeal DNA polymerase II family. In terms of assembly, heterodimer of a large subunit and a small subunit. In terms of processing, this protein undergoes a protein self splicing that involves a post-translational excision of the intervening region (intein) followed by peptide ligation.

It carries out the reaction DNA(n) + a 2'-deoxyribonucleoside 5'-triphosphate = DNA(n+1) + diphosphate. The catalysed reaction is Exonucleolytic cleavage in the 3'- to 5'-direction to yield nucleoside 5'-phosphates.. Functionally, possesses two activities: a DNA synthesis (polymerase) and an exonucleolytic activity that degrades single-stranded DNA in the 3'- to 5'-direction. Has a template-primer preference which is characteristic of a replicative DNA polymerase. This is DNA polymerase II large subunit from Methanoculleus marisnigri (strain ATCC 35101 / DSM 1498 / JR1).